Reading from the N-terminus, the 370-residue chain is NAD-dependent histone deacetylase HST4 (370 aa).

The tract at residues 1–27 is disordered; that stretch reads MKQKFVLPITPPSTAEKKPQTENRCNE. Over residues 15–27 the composition is skewed to basic and acidic residues; sequence AEKKPQTENRCNE. The region spanning 75-370 is the Deacetylase sirtuin-type domain; that stretch reads RHHMDRDAGF…GDCQHVTSLL (296 aa). NAD(+)-binding positions include 100-119 and 184-187; these read GAGI…EGIF and QNID. His213 (proton acceptor) is an active-site residue. 4 residues coordinate Zn(2+): Cys221, Cys224, Cys251, and Cys254. Residues 310 to 312, 340 to 342, and Cys363 contribute to the NAD(+) site; these read GTS and NTS.

Belongs to the sirtuin family. Class I subfamily. Zn(2+) is required as a cofactor.

Its subcellular location is the nucleus. The enzyme catalyses N(6)-acetyl-L-lysyl-[protein] + NAD(+) + H2O = 2''-O-acetyl-ADP-D-ribose + nicotinamide + L-lysyl-[protein]. Its function is as follows. NAD-dependent histone deacetylase, which contributes together with HST3 to histone H3 'Lys-56' deacetylation, regulation of telomeric silencing, proper cell cycle progression, DNA damage control, DNA recombination, and genomic maintenance. This Saccharomyces cerevisiae (strain ATCC 204508 / S288c) (Baker's yeast) protein is NAD-dependent histone deacetylase HST4 (HST4).